A 314-amino-acid polypeptide reads, in one-letter code: Ribonuclease Z (314 aa).

Zn(2+)-binding residues include His61, His63, Asp65, His66, His139, Asp211, and His269. Asp65 acts as the Proton acceptor in catalysis.

Belongs to the RNase Z family. As to quaternary structure, homodimer. The cofactor is Zn(2+).

The catalysed reaction is Endonucleolytic cleavage of RNA, removing extra 3' nucleotides from tRNA precursor, generating 3' termini of tRNAs. A 3'-hydroxy group is left at the tRNA terminus and a 5'-phosphoryl group is left at the trailer molecule.. Zinc phosphodiesterase, which displays some tRNA 3'-processing endonuclease activity. Probably involved in tRNA maturation, by removing a 3'-trailer from precursor tRNA. This chain is Ribonuclease Z, found in Gemmatimonas aurantiaca (strain DSM 14586 / JCM 11422 / NBRC 100505 / T-27).